A 375-amino-acid chain; its full sequence is Enoyl-[acyl-carrier-protein] reductase, mitochondrial (375 aa).

The transit peptide at 1-37 (MAALMESVVGRALKFSSTANFRSIRRGETPTLCIKSF) directs the protein to the mitochondrion. Tyr-96 serves as the catalytic Proton donor. NADP(+) is bound by residues Asn-169, 195–198 (TSIV), 218–220 (RDR), 287–290 (YGGM), 312–314 (FWL), and Lys-370.

Belongs to the zinc-containing alcohol dehydrogenase family. Quinone oxidoreductase subfamily. As to quaternary structure, homodimer.

The protein localises to the mitochondrion. The enzyme catalyses a 2,3-saturated acyl-[ACP] + NADP(+) = a (2E)-enoyl-[ACP] + NADPH + H(+). Its function is as follows. Catalyzes the NADPH-dependent reduction of trans-2-enoyl thioesters in mitochondrial fatty acid synthesis (fatty acid synthesis type II). Fatty acid chain elongation in mitochondria uses acyl carrier protein (ACP) as an acyl group carrier, but the enzyme accepts both ACP and CoA thioesters as substrates in vitro. This chain is Enoyl-[acyl-carrier-protein] reductase, mitochondrial, found in Arabidopsis thaliana (Mouse-ear cress).